A 237-amino-acid polypeptide reads, in one-letter code: Small ribosomal subunit protein uS2 (237 aa).

The protein belongs to the universal ribosomal protein uS2 family.

The protein is Small ribosomal subunit protein uS2 of Clostridioides difficile (strain 630) (Peptoclostridium difficile).